The sequence spans 292 residues: UTP--glucose-1-phosphate uridylyltransferase (292 aa).

It belongs to the UDPGP type 2 family.

The enzyme catalyses alpha-D-glucose 1-phosphate + UTP + H(+) = UDP-alpha-D-glucose + diphosphate. Functionally, may play a role in stationary phase survival. The polypeptide is UTP--glucose-1-phosphate uridylyltransferase (galU) (Mycoplasma genitalium (strain ATCC 33530 / DSM 19775 / NCTC 10195 / G37) (Mycoplasmoides genitalium)).